The primary structure comprises 197 residues: Adenylate kinase isoenzyme 6 homolog FAP7 (197 aa).

5 residues coordinate ATP: G17, G19, K20, S21, and S22. An NMPbind region spans residues 38–61 (NISDFAKDNDCFEGYDEGRKSHIV). Positions 113 to 123 (ARGYHDSKIEE) are LID. An ATP-binding site is contributed by R114. The disordered stretch occupies residues 176-197 (PDGVTNEYQGPRSDDEDDEDSE). Y183 is subject to Phosphotyrosine. A phosphoserine mark is found at S188 and S196.

It belongs to the adenylate kinase family. AK6 subfamily. In terms of assembly, interacts with small ribosomal subunit protein uS11B/RPS14B. Not a structural component of 43S pre-ribosomes, but transiently interacts with them by binding to uS11/RPS14.

The protein resides in the cytoplasm. The protein localises to the nucleus. It carries out the reaction AMP + ATP = 2 ADP. It catalyses the reaction ATP + H2O = ADP + phosphate + H(+). In terms of biological role, broad-specificity nucleoside monophosphate (NMP) kinase that catalyzes the reversible transfer of the terminal phosphate group between nucleoside triphosphates and monophosphates. Also has ATPase activity. Involved in the late cytoplasmic maturation steps of the 40S ribosomal particles, specifically 18S rRNA maturation. Required for cleavage of the 20S pre-rRNA at site D in the cytoplasm. While NMP activity is not required for ribosome maturation, ATPase activity is. Associates transiently with small ribosomal subunit protein uS11. ATP hydrolysis breaks the interaction with uS11. May temporarily remove uS11 from the ribosome to enable a conformational change of the ribosomal RNA that is needed for the final maturation step of the small ribosomal subunit. Promotes formation of the rotated state in 80S-like ribosomes, a key intermediate in translocation, thereby releasing the essential assembly factor DIM1 from pre-40S subunits. Its NMP activity may have a role in nuclear energy homeostasis. Involved in oxidative stress response. Required for POS9-dependent target gene transcription upon oxidative stress. This is Adenylate kinase isoenzyme 6 homolog FAP7 from Saccharomyces cerevisiae (strain ATCC 204508 / S288c) (Baker's yeast).